Reading from the N-terminus, the 195-residue chain is ATP-dependent Clp protease proteolytic subunit 2 (195 aa).

Ser95 acts as the Nucleophile in catalysis. Residue His120 is part of the active site.

It belongs to the peptidase S14 family. As to quaternary structure, fourteen ClpP subunits assemble into 2 heptameric rings which stack back to back to give a disk-like structure with a central cavity, resembling the structure of eukaryotic proteasomes.

It is found in the cytoplasm. The enzyme catalyses Hydrolysis of proteins to small peptides in the presence of ATP and magnesium. alpha-casein is the usual test substrate. In the absence of ATP, only oligopeptides shorter than five residues are hydrolyzed (such as succinyl-Leu-Tyr-|-NHMec, and Leu-Tyr-Leu-|-Tyr-Trp, in which cleavage of the -Tyr-|-Leu- and -Tyr-|-Trp bonds also occurs).. Cleaves peptides in various proteins in a process that requires ATP hydrolysis. Has a chymotrypsin-like activity. Plays a major role in the degradation of misfolded proteins. This is ATP-dependent Clp protease proteolytic subunit 2 from Methylococcus capsulatus (strain ATCC 33009 / NCIMB 11132 / Bath).